A 312-amino-acid chain; its full sequence is MDDKFDDDALPNSKTTAKDYEDKLPEYDYTTTFPNTWMRLREPFREYFAEFVGVAVLIIFGVGADCQVVLSANTGVASSPKGSYLSLNCGWAIGTAMGVWISGGISGGHINPAVTLAMATWRGFPWWKVPGFIFAQLLGGIVGAGLVYVNYIHAIDIVEGGRHIRTLDTAGLFATYAADYMTNLSCFFSEFLATAVLIIVIHAMNDKRNTPPPAGIVPFVLFFLILGIGASLGMETGYAINPARDLGPRMLTAMVGYGRQVFAFRNQYWIWCPVLAPFLGAQVGTIFYDLFFYKGQDNVFGRLGSHIHISPA.

At 1 to 50 (MDDKFDDDALPNSKTTAKDYEDKLPEYDYTTTFPNTWMRLREPFREYFAE) the chain is on the cytoplasmic side. Residues 51–71 (FVGVAVLIIFGVGADCQVVLS) traverse the membrane as a helical segment. At 72–89 (ANTGVASSPKGSYLSLNC) the chain is on the extracellular side. Residues 90–110 (GWAIGTAMGVWISGGISGGHI) form a helical membrane-spanning segment. The NPA 1 signature appears at 111–113 (NPA). Topologically, residues 111–128 (NPAVTLAMATWRGFPWWK) are cytoplasmic. The helical transmembrane segment at 129-149 (VPGFIFAQLLGGIVGAGLVYV) threads the bilayer. Over 150–183 (NYIHAIDIVEGGRHIRTLDTAGLFATYAADYMTN) the chain is Extracellular. Residue N183 is glycosylated (N-linked (GlcNAc...) asparagine). The helical transmembrane segment at 184–204 (LSCFFSEFLATAVLIIVIHAM) threads the bilayer. Residues 205–213 (NDKRNTPPP) lie on the Cytoplasmic side of the membrane. Residues 214-234 (AGIVPFVLFFLILGIGASLGM) form a helical membrane-spanning segment. Residues 235-267 (ETGYAINPARDLGPRMLTAMVGYGRQVFAFRNQ) are Extracellular-facing. An NPA 2 motif is present at residues 241 to 243 (NPA). Residues 268-288 (YWIWCPVLAPFLGAQVGTIFY) traverse the membrane as a helical segment. Over 289–312 (DLFFYKGQDNVFGRLGSHIHISPA) the chain is Cytoplasmic.

This sequence belongs to the MIP/aquaporin (TC 1.A.8) family.

It is found in the membrane. The enzyme catalyses H2O(in) = H2O(out). In terms of biological role, water channel required to facilitate the transport of water across membranes. Does not mediate the transport carbon dioxide nor nitric oxide across the membrane. Plays a key role in root water transport of mycorrhizal plant such ectomycorrhizal white spruce or trembling aspen via the hydration at the hyphal-root interphase. Contributes in fungal cellular processes during the basidiocarp formation. The sequence is that of Aquaporin-6 from Laccaria bicolor (Bicoloured deceiver).